A 314-amino-acid chain; its full sequence is Beta-ketoacyl-[acyl-carrier-protein] synthase III (314 aa).

Active-site residues include C112 and H241. The tract at residues 242–246 (QANIR) is ACP-binding. The active site involves N271.

It belongs to the thiolase-like superfamily. FabH family. Homodimer.

The protein resides in the cytoplasm. It catalyses the reaction malonyl-[ACP] + acetyl-CoA + H(+) = 3-oxobutanoyl-[ACP] + CO2 + CoA. The protein operates within lipid metabolism; fatty acid biosynthesis. Functionally, catalyzes the condensation reaction of fatty acid synthesis by the addition to an acyl acceptor of two carbons from malonyl-ACP. Catalyzes the first condensation reaction which initiates fatty acid synthesis and may therefore play a role in governing the total rate of fatty acid production. Possesses both acetoacetyl-ACP synthase and acetyl transacylase activities. Its substrate specificity determines the biosynthesis of branched-chain and/or straight-chain of fatty acids. The chain is Beta-ketoacyl-[acyl-carrier-protein] synthase III from Vesicomyosocius okutanii subsp. Calyptogena okutanii (strain HA).